Consider the following 138-residue polypeptide: Small ribosomal subunit protein uS11c (138 aa).

Positions 1-23 (MAKAIPRVGSRKNGRISSRKSAR) are disordered. The segment covering 9 to 23 (GSRKNGRISSRKSAR) has biased composition (basic residues).

This sequence belongs to the universal ribosomal protein uS11 family. As to quaternary structure, part of the 30S ribosomal subunit.

It localises to the plastid. The protein resides in the chloroplast. This is Small ribosomal subunit protein uS11c from Coffea arabica (Arabian coffee).